We begin with the raw amino-acid sequence, 622 residues long: MKTLLIHSDYLEFEAKEKTKIAEDTDVLNGKMDECLTVFIAVEKDDESDPDAVVKNAVDEIVKTADNLKVKNVVVYPYAHLSSDLGSPATAKEILAEIEKELSGDYEVLRAPFGWYKAFKISCKGHPLSELSRKITTERKEEVKKEKVVSKFYIINGENLELTEVNDEVISKMEDKGLLALLKHELDIKEEGKDNGEPPHVKYIKEKEICDYEPSSDAGHFRWYPKGKLIRDLLSDYVYNLVVENGGMPVETPVMYDLQNNAIREHADKFGERQYRFKQGNKDLMLRFAACFGQFMMKKDMYLLPKHMPLKLYELSTYSFRYEQRGELVGLKRLRAFTMPDMHTVCIDMKQAMEAFEDQLWMGLKTGDDFKTPYAIIFRFTEDFFEENKEWFFGMAKEYKQKYGKDAILEILPGRKHYWVGKVDMAVVDSFGRPIENPTVQIDVESAERFGIVVHDGDKKVQPIILHCSPTGSVERVLCGLLENAYLNTLENKPPALPTWLTPIQARVIPVGDKHAEFALEVATKLRASGIRADFDDREDSMGKKVRNAGTDWVNYVVVIGDSEMESSKLTVTVREESELKKAKKESLTVEELIEKITSDVKDAPKRPLPLPMKCSVQPIFR.

Residues 1-141 (MKTLLIHSDY…SRKITTERKE (141 aa)) form an editing domain region. Residues 199-498 (PHVKYIKEKE…TLENKPPALP (300 aa)) are catalytic. Cysteine 291, histidine 343, and histidine 467 together coordinate Zn(2+).

It belongs to the class-II aminoacyl-tRNA synthetase family. In terms of assembly, homodimer. It depends on Zn(2+) as a cofactor.

It is found in the cytoplasm. It carries out the reaction tRNA(Thr) + L-threonine + ATP = L-threonyl-tRNA(Thr) + AMP + diphosphate + H(+). Functionally, catalyzes the attachment of threonine to tRNA(Thr) in a two-step reaction: L-threonine is first activated by ATP to form Thr-AMP and then transferred to the acceptor end of tRNA(Thr). Also edits incorrectly charged L-seryl-tRNA(Thr). This is Threonine--tRNA ligase from Methanococcus maripaludis (strain C5 / ATCC BAA-1333).